Reading from the N-terminus, the 708-residue chain is Lactotransferrin (708 aa).

Residues 1–19 form the signal peptide; that stretch reads MKLFVPALLSLGALGLCLA. 2 Transferrin-like domains span residues 25–352 and 364–693; these read VRWC…NLRE and VVWC…NLKK. 2 disulfide bridges follow: cysteine 28/cysteine 64 and cysteine 38/cysteine 55. Aspartate 79 lines the Fe cation pocket. The active site involves lysine 92. Position 111 (tyrosine 111) interacts with Fe cation. Disulfide bonds link cysteine 134–cysteine 217, cysteine 176–cysteine 192, cysteine 179–cysteine 202, cysteine 189–cysteine 200, and cysteine 250–cysteine 264. Hydrogencarbonate contacts are provided by threonine 136, arginine 140, alanine 142, and glycine 143. A Fe cation-binding site is contributed by tyrosine 211. A glycan (N-linked (GlcNAc...) (high mannose) asparagine) is linked at asparagine 252. Residue histidine 272 participates in Fe cation binding. Serine 278 (nucleophile) is an active-site residue. A glycan (N-linked (GlcNAc...) (hybrid) asparagine) is linked at asparagine 300. 2 disulfides stabilise this stretch: cysteine 367-cysteine 399 and cysteine 377-cysteine 390. Fe cation-binding residues include aspartate 414 and tyrosine 452. 8 disulfide bridges follow: cysteine 424–cysteine 703, cysteine 444–cysteine 666, cysteine 476–cysteine 551, cysteine 500–cysteine 694, cysteine 510–cysteine 524, cysteine 521–cysteine 534, cysteine 592–cysteine 606, and cysteine 644–cysteine 649. The hydrogencarbonate site is built by threonine 478, arginine 482, alanine 484, and glycine 485. Asparagine 495 carries N-linked (GlcNAc...) (complex) asparagine; alternate glycosylation. Residue asparagine 495 is glycosylated (N-linked (GlcNAc...) (high mannose) asparagine; alternate). Residue asparagine 495 is glycosylated (N-linked (GlcNAc...) (hybrid) asparagine; alternate). Tyrosine 545 contributes to the Fe cation binding site. Asparagine 564 is a glycosylation site (N-linked (GlcNAc...) (high mannose) asparagine). A Fe cation-binding site is contributed by histidine 614.

The protein belongs to the transferrin family. As to quaternary structure, monomer. Found in a complex with LTF, CLU, EPPIN and SEMG1. Found in a complex with MPO and LTF; interacts directly with CP, allows Fe(3+) incorporation into LTF and activation of CP ferroxidase activity. In terms of processing, poly-N-acetyllactosaminic carbohydrate moiety seems to be needed for TLR4 activation.

It localises to the secreted. Its subcellular location is the cytoplasmic granule. Functionally, transferrins are iron binding transport proteins which can bind two Fe(3+) ions in association with the binding of an anion, usually bicarbonate. Major iron-binding and multifunctional protein found in exocrine fluids such as breast milk and mucosal secretions. Has antimicrobial activity, which depends on the extracellular cation concentration. Antimicrobial properties include bacteriostasis, which is related to its ability to sequester free iron and thus inhibit microbial growth, as well as direct bactericidal properties leading to the release of lipopolysaccharides from the bacterial outer membrane. Can also prevent bacterial biofilm development in P.aeruginosa infection. Has weak antifungal activity against C.albicans. Has anabolic, differentiating and anti-apoptotic effects on osteoblasts and can also inhibit osteoclastogenesis, possibly playing a role in the regulation of bone growth. Promotes binding of species C adenoviruses to epithelial cells, promoting adenovirus infection. Can inhibit papillomavirus infections. Stimulates the TLR4 signaling pathway leading to NF-kappa-B activation and subsequent pro-inflammatory cytokine production while also interfering with the lipopolysaccharide (LPS)-stimulated TLR4 signaling. Inhibits neutrophil granulocyte migration to sites of apoptosis, when secreted by apoptotic cells. Stimulates VEGFA-mediated endothelial cell migration and proliferation. Binds heparin, chondroitin sulfate and possibly other glycosaminoglycans (GAGs). Also binds specifically to pneumococcal surface protein A (PspA), the lipid A portion of bacterial lipopolysaccharide (LPS), lysozyme and DNA. In terms of biological role, lactoferricin binds to the bacterial surface and is crucial for the bactericidal functions. Has some antiviral activity against papillomavirus infection. N-terminal region shows strong antifungal activity against C.albicans. Contains two BBXB heparin-binding consensus sequences that appear to form the predominate functional GAG-binding site. Its function is as follows. The lactotransferrin transferrin-like domain 1 functions as a serine protease of the peptidase S60 family that cuts arginine rich regions. This function contributes to the antimicrobial activity. Shows a preferential cleavage at -Arg-Ser-Arg-Arg-|- and -Arg-Arg-Ser-Arg-|-, and of Z-Phe-Arg-|-aminomethylcoumarin sites. This chain is Lactotransferrin (LTF), found in Bubalus bubalis (Domestic water buffalo).